Consider the following 219-residue polypeptide: MTQDEQKRAVAQAALQYVPTGEIIGIGTGSTANLFIDELAKIKHRIEGAVASSEVTANRLKQHGIEVLDLNSVGELPVYIDGADEITRNMHMIKGGGGALTREKIVAAVARKFICIADQSKLVKVLGKFPLPVEVIPMARSYVAREITLLGGQPAWRQGFTTDNGNIILDVHNLNIMNPVELETALNQIAGVVTNGLFARRAANVLLMGTDQGVETITV.

Residues 28–31, 81–84, and 94–97 each bind substrate; these read TGST, DGAD, and KGGG. Residue E103 is the Proton acceptor of the active site. K121 is a binding site for substrate.

The protein belongs to the ribose 5-phosphate isomerase family. In terms of assembly, homodimer.

The enzyme catalyses aldehydo-D-ribose 5-phosphate = D-ribulose 5-phosphate. The protein operates within carbohydrate degradation; pentose phosphate pathway; D-ribose 5-phosphate from D-ribulose 5-phosphate (non-oxidative stage): step 1/1. Functionally, catalyzes the reversible conversion of ribose-5-phosphate to ribulose 5-phosphate. The protein is Ribose-5-phosphate isomerase A of Nitrosomonas europaea (strain ATCC 19718 / CIP 103999 / KCTC 2705 / NBRC 14298).